The chain runs to 144 residues: uncharacterized protein (144 aa).

Positions 50–140 constitute a Rhodanese domain; sequence NQDKAIVVDT…YWKTDNLPLI (91 aa).

This is an uncharacterized protein from Buchnera aphidicola subsp. Acyrthosiphon pisum (strain APS) (Acyrthosiphon pisum symbiotic bacterium).